The sequence spans 204 residues: Cysteine-rich protein 3 (204 aa).

The LIM zinc-binding 1 domain maps to 3–64; it reads WTCPRCQQPV…KPCYGALFGP (62 aa). A disordered region spans residues 88-107; that stretch reads ISLSPSNFSPPRPRTGLSRA. Positions 122-183 constitute an LIM zinc-binding 2 domain; that stretch reads SLCPGCGDPV…IPCYGYLFGP (62 aa).

In terms of tissue distribution, expressed specifically by the thymus.

The protein resides in the cytoplasm. This is Cysteine-rich protein 3 (Crip3) from Mus musculus (Mouse).